The primary structure comprises 161 residues: Large ribosomal subunit protein bL21m (161 aa).

A mitochondrion-targeting transit peptide spans 1 to 35; sequence MLQLKFIWPVARITPIYRPFTSHPFRNLATSSSIS.

The protein belongs to the bacterial ribosomal protein bL21 family. Component of the mitochondrial large ribosomal subunit (mt-LSU). Mature yeast 74S mitochondrial ribosomes consist of a small (37S) and a large (54S) subunit. The 37S small subunit contains a 15S ribosomal RNA (15S mt-rRNA) and 34 different proteins. The 54S large subunit contains a 21S rRNA (21S mt-rRNA) and 46 different proteins.

Its subcellular location is the mitochondrion. In terms of biological role, component of the mitochondrial ribosome (mitoribosome), a dedicated translation machinery responsible for the synthesis of mitochondrial genome-encoded proteins, including at least some of the essential transmembrane subunits of the mitochondrial respiratory chain. The mitoribosomes are attached to the mitochondrial inner membrane and translation products are cotranslationally integrated into the membrane. This Saccharomyces cerevisiae (strain ATCC 204508 / S288c) (Baker's yeast) protein is Large ribosomal subunit protein bL21m (MRPL49).